The chain runs to 396 residues: Probable sugar efflux transporter (396 aa).

12 consecutive transmembrane segments (helical) span residues 15 to 35 (VVTLAVAAFIFNTTEFVPVGL), 50 to 70 (VGIMLTIYAWVVALMSLPFML), 81 to 101 (LICLFVVFIASHVLSFLSWSF), 103 to 123 (VLVISRIGVAFAHAIFWSITA), 136 to 156 (AQALSLIATGTALAMVLGLPL), 170 to 190 (FFAIGIGALITLLCLIKLLPL), 209 to 229 (PALMSIYLLTVVVVTAHYTAY), 246 to 266 (FATALLLLLGGAGIIGSVIFG), 275 to 295 (ALVSTAIALLLVCLALLLPAA), 299 to 319 (IHLGVLSIFWGIAMMIIGLGM), 333 to 353 (VAMALFSGIFNIGIGAGALVG), and 364 to 384 (MIGYVGAVPAFAALIWSIIIF).

This sequence belongs to the major facilitator superfamily. SotB (TC 2.A.1.2) family.

It is found in the cell inner membrane. Functionally, involved in the efflux of sugars. The physiological role may be the reduction of the intracellular concentration of toxic sugars or sugar metabolites. The sequence is that of Probable sugar efflux transporter from Escherichia coli O139:H28 (strain E24377A / ETEC).